Reading from the N-terminus, the 205-residue chain is MGNCFRRLSLFGQPTQAKYEMLCSSDDLETEELTFFLDMTYKDFGVYQNDIISHQKDTETMKTLLGLLPMYKKTKLRHTVMERCLSNCPNHVKDALCVELMKAEKILQTMDVVFMKTLIGEFSMCTENLNQLLNKFATDQSTLSDVEKINSLIEIDGENSKRLLVELDPILHEETGLYQALPNVVTEAPSEKVKSIRVESEGESV.

A lipid anchor (S-palmitoyl cysteine; by host) is attached at Cys-4.

The protein belongs to the herpesviridae UL51 family. In terms of assembly, oligomerizes. Interacts with U75; this interaction mediates U75 incorporation to virions. Phosphorylated. Post-translationally, palmitoylation is necessary for Golgi localization.

It localises to the virion tegument. It is found in the host cytoplasm. Its subcellular location is the host Golgi apparatus. Its function is as follows. Plays several roles during the time course of infection, including egress of virus particles from the perinuclear space and secondary envelopment of cytoplasmic capsids that bud into specific trans-Golgi network (TGN)-derived membranes. This is Tegument protein UL51 homolog (U44) from Homo sapiens (Human).